Here is a 345-residue protein sequence, read N- to C-terminus: Ribosome production factor 1 (345 aa).

2 disordered regions span residues 1–57 (MAKA…ISEI) and 70–105 (WKQQQRKEKLAAKKKLKREREALGDKAPPKPVPKTI). The span at 87–97 (REREALGDKAP) shows a compositional bias: basic and acidic residues. The region spanning 142–325 (PKILITTSDR…LRSLQKGTFD (184 aa)) is the Brix domain. An RNA-binding region spans residues 303 to 320 (VGIQELGPRFTLKLRSLQ).

The protein resides in the nucleus. Its subcellular location is the nucleolus. In terms of biological role, may be required for ribosome biogenesis. This chain is Ribosome production factor 1 (Rpf1), found in Rattus norvegicus (Rat).